A 142-amino-acid chain; its full sequence is ATP synthase epsilon chain, chloroplastic (142 aa).

It belongs to the ATPase epsilon chain family. In terms of assembly, F-type ATPases have 2 components, CF(1) - the catalytic core - and CF(0) - the membrane proton channel. CF(1) has five subunits: alpha(3), beta(3), gamma(1), delta(1), epsilon(1). CF(0) has three main subunits: a, b and c.

It is found in the plastid. The protein resides in the chloroplast thylakoid membrane. Produces ATP from ADP in the presence of a proton gradient across the membrane. This is ATP synthase epsilon chain, chloroplastic from Ostreococcus tauri.